A 297-amino-acid polypeptide reads, in one-letter code: Homoserine kinase (297 aa).

Residue 82–92 (PLTRGLGSSAS) participates in ATP binding.

It belongs to the GHMP kinase family. Homoserine kinase subfamily.

The protein resides in the cytoplasm. The catalysed reaction is L-homoserine + ATP = O-phospho-L-homoserine + ADP + H(+). It functions in the pathway amino-acid biosynthesis; L-threonine biosynthesis; L-threonine from L-aspartate: step 4/5. Its function is as follows. Catalyzes the ATP-dependent phosphorylation of L-homoserine to L-homoserine phosphate. The sequence is that of Homoserine kinase from Bacillus cereus (strain B4264).